We begin with the raw amino-acid sequence, 428 residues long: Glutamate-1-semialdehyde 2,1-aminomutase (428 aa).

At K267 the chain carries N6-(pyridoxal phosphate)lysine.

This sequence belongs to the class-III pyridoxal-phosphate-dependent aminotransferase family. HemL subfamily. As to quaternary structure, homodimer. Requires pyridoxal 5'-phosphate as cofactor.

The protein localises to the cytoplasm. The catalysed reaction is (S)-4-amino-5-oxopentanoate = 5-aminolevulinate. The protein operates within porphyrin-containing compound metabolism; protoporphyrin-IX biosynthesis; 5-aminolevulinate from L-glutamyl-tRNA(Glu): step 2/2. This is Glutamate-1-semialdehyde 2,1-aminomutase from Persephonella marina (strain DSM 14350 / EX-H1).